A 200-amino-acid chain; its full sequence is MITSIQGTLVSATPLQAIVEVAGFGYEVHIPVTTAERLPAAGAAVKLHTLVIYREDSQTLYGFASPAERDFFRLMIEHVTGVGPKMALSIMSRLALPSLESAIRMGDVASLAKCPGIGKKTAERLVVELRTKVGATGAAPGLATQPAAAASPGASAHRDAVAALVALGYRSADADEAVRRASLALGEAATTESLIKKALS.

The domain I stretch occupies residues Met-1–Ala-64. Residues Ser-65–Thr-144 form a domain II region. The segment at Gln-145 to Ser-151 is flexible linker. Residues Pro-152–Ser-200 are domain III.

This sequence belongs to the RuvA family. As to quaternary structure, homotetramer. Forms an RuvA(8)-RuvB(12)-Holliday junction (HJ) complex. HJ DNA is sandwiched between 2 RuvA tetramers; dsDNA enters through RuvA and exits via RuvB. An RuvB hexamer assembles on each DNA strand where it exits the tetramer. Each RuvB hexamer is contacted by two RuvA subunits (via domain III) on 2 adjacent RuvB subunits; this complex drives branch migration. In the full resolvosome a probable DNA-RuvA(4)-RuvB(12)-RuvC(2) complex forms which resolves the HJ.

The protein resides in the cytoplasm. In terms of biological role, the RuvA-RuvB-RuvC complex processes Holliday junction (HJ) DNA during genetic recombination and DNA repair, while the RuvA-RuvB complex plays an important role in the rescue of blocked DNA replication forks via replication fork reversal (RFR). RuvA specifically binds to HJ cruciform DNA, conferring on it an open structure. The RuvB hexamer acts as an ATP-dependent pump, pulling dsDNA into and through the RuvAB complex. HJ branch migration allows RuvC to scan DNA until it finds its consensus sequence, where it cleaves and resolves the cruciform DNA. This Opitutus terrae (strain DSM 11246 / JCM 15787 / PB90-1) protein is Holliday junction branch migration complex subunit RuvA.